A 130-amino-acid chain; its full sequence is MLYNIPCRIYILSTLSLCISGIVSTATATSSETKISNEETLVVTTNRSASNLWESPATIQVIDQQTLQNSTNASIADNLQDIPGVEITDNSLAGRKQIRIRGWICPYISRHLLSLNPLQARCRRYSRGER.

Residues 1-28 form the signal peptide; the sequence is MLYNIPCRIYILSTLSLCISGIVSTATA. One can recognise a TBDR plug domain in the interval 51–130; it reads NLWESPATIQ…RCRRYSRGER (80 aa).

This sequence belongs to the TonB-dependent receptor family.

This is Protein YoeA (yoeA) from Escherichia coli (strain K12).